Here is a 646-residue protein sequence, read N- to C-terminus: Protein kinase YegI (646 aa).

Residues 13-300 (VTPGRELGKG…KAWVAALDLL (288 aa)) form the Protein kinase domain. ATP-binding positions include 19–27 (LGKGGEGAV) and Lys39. The Proton acceptor role is filled by Asp141.

Autophosphorylated.

Its function is as follows. Probable serine/threonine kinase. The protein is Protein kinase YegI (yegI) of Escherichia coli O157:H7.